The chain runs to 102 residues: Small ribosomal subunit protein uS10 (102 aa).

Belongs to the universal ribosomal protein uS10 family. As to quaternary structure, part of the 30S ribosomal subunit.

Functionally, involved in the binding of tRNA to the ribosomes. The polypeptide is Small ribosomal subunit protein uS10 (Opitutus terrae (strain DSM 11246 / JCM 15787 / PB90-1)).